We begin with the raw amino-acid sequence, 252 residues long: tRNA (guanine-N(7)-)-methyltransferase (252 aa).

Residues Glu-51, Asp-76, Asn-103, and Asp-125 each contribute to the S-adenosyl-L-methionine site. Asp-125 is an active-site residue. Substrate contacts are provided by residues Lys-129, Asp-159, and 199–202 (TYYE).

Belongs to the class I-like SAM-binding methyltransferase superfamily. TrmB family.

The enzyme catalyses guanosine(46) in tRNA + S-adenosyl-L-methionine = N(7)-methylguanosine(46) in tRNA + S-adenosyl-L-homocysteine. It participates in tRNA modification; N(7)-methylguanine-tRNA biosynthesis. Functionally, catalyzes the formation of N(7)-methylguanine at position 46 (m7G46) in tRNA. The protein is tRNA (guanine-N(7)-)-methyltransferase of Bacteroides fragilis (strain YCH46).